The primary structure comprises 282 residues: Purine nucleoside phosphorylase (282 aa).

Phosphate is bound by residues Ser-46, His-78, and 103–105 (RTH). Residue Glu-204 is part of the active site. Glu-204 contributes to the a purine D-ribonucleoside binding site. Ser-223 is a phosphate binding site. Asn-246 contacts a purine D-ribonucleoside.

It belongs to the PNP/MTAP phosphorylase family. Homotrimer.

It carries out the reaction a purine 2'-deoxy-D-ribonucleoside + phosphate = a purine nucleobase + 2-deoxy-alpha-D-ribose 1-phosphate. It participates in purine metabolism; purine nucleoside salvage. The purine nucleoside phosphorylases catalyze the phosphorolytic breakdown of the N-glycosidic bond in the beta-(deoxy)ribonucleoside molecules, with the formation of the corresponding free purine bases and pentose-1-phosphate. Cleaves guanosine, inosine, 2'-deoxyguanosine and 2'-deoxyinosine. This is Purine nucleoside phosphorylase (punA) from Cellulomonas sp.